Reading from the N-terminus, the 530-residue chain is UPF0422 protein lpl2888 (530 aa).

The N-terminal stretch at 1-19 (MKFKKIILALACLSSPLYA) is a signal peptide. Positions 20–66 (DQDQQLKSEIQRLQHQAEDLQAQLNRLQKQLANHKSSQQKHEQQAAT) form a coiled coil. The tract at residues 50–81 (LANHKSSQQKHEQQAATKPAEPQSKPTVKSGA) is disordered.

It belongs to the UPF0422 family.

This Legionella pneumophila (strain Lens) protein is UPF0422 protein lpl2888.